Here is an 89-residue protein sequence, read N- to C-terminus: UPF0237 protein DIP1286 (89 aa).

In terms of domain architecture, ACT spans 4–78; sequence IISVTGADHT…KDQNLVIRIQ (75 aa).

The protein belongs to the UPF0237 family.

The chain is UPF0237 protein DIP1286 from Corynebacterium diphtheriae (strain ATCC 700971 / NCTC 13129 / Biotype gravis).